The primary structure comprises 118 residues: uncharacterized protein (118 aa).

The N-terminal stretch at 1 to 26 (MTKLKMLSMLTVMIASLFIFSSQALA) is a signal peptide. Residues 30 to 104 (FTVSTSSGAP…VNIGYVSDTY (75 aa)) form the SH3b domain.

It to B.subtilis YraI.

This is an uncharacterized protein from Bacillus subtilis (strain 168).